A 256-amino-acid polypeptide reads, in one-letter code: Pimeloyl-[acyl-carrier protein] methyl ester esterase (256 aa).

Positions 15–242 constitute an AB hydrolase-1 domain; sequence HLVLLHGWGL…AAHAPFISHP (228 aa). Substrate is bound by residues Trp22, 82–83, and 143–147; these read SL and FLALQ. Ser82 functions as the Nucleophile in the catalytic mechanism. Active-site residues include Asp207 and His235. His235 contacts substrate.

Belongs to the AB hydrolase superfamily. Carboxylesterase BioH family. In terms of assembly, monomer.

It is found in the cytoplasm. The catalysed reaction is 6-carboxyhexanoyl-[ACP] methyl ester + H2O = 6-carboxyhexanoyl-[ACP] + methanol + H(+). It participates in cofactor biosynthesis; biotin biosynthesis. Its function is as follows. The physiological role of BioH is to remove the methyl group introduced by BioC when the pimeloyl moiety is complete. It allows to synthesize pimeloyl-ACP via the fatty acid synthetic pathway through the hydrolysis of the ester bonds of pimeloyl-ACP esters. The polypeptide is Pimeloyl-[acyl-carrier protein] methyl ester esterase (Escherichia coli O127:H6 (strain E2348/69 / EPEC)).